Here is a 524-residue protein sequence, read N- to C-terminus: Thermosome subunit 3 (524 aa).

It belongs to the TCP-1 chaperonin family. As to quaternary structure, the thermosome or CCT complex is a oligomeric complex of two octameric double-ring structures; the complex is probably a heterooligomer of CCT1, CCT2 and CCT3 with yet unknown stoichiometry.

In terms of biological role, molecular chaperone that assists in the folding or refolding of nascent or denatured proteins along with ATP hydrolysis. ATPase activity is highest in thermosome assemblies containing CCT1:CCT2, followed by assemblies containing CCT1:CCT2:CCT3. Not required for thermosome ATPase activity. Not required for growth. This chain is Thermosome subunit 3 (cct3), found in Haloferax volcanii (strain ATCC 29605 / DSM 3757 / JCM 8879 / NBRC 14742 / NCIMB 2012 / VKM B-1768 / DS2) (Halobacterium volcanii).